Reading from the N-terminus, the 102-residue chain is Small ribosomal subunit protein uS17 (102 aa).

Positions 1–15 are enriched in polar residues; the sequence is MTDETASQEASQSTD. Residues 1 to 20 form a disordered region; that stretch reads MTDETASQEASQSTDAAAPA.

The protein belongs to the universal ribosomal protein uS17 family. In terms of assembly, part of the 30S ribosomal subunit.

One of the primary rRNA binding proteins, it binds specifically to the 5'-end of 16S ribosomal RNA. This chain is Small ribosomal subunit protein uS17, found in Frankia casuarinae (strain DSM 45818 / CECT 9043 / HFP020203 / CcI3).